A 716-amino-acid chain; its full sequence is Translation initiation factor IF-2 (716 aa).

Residues 50–137 (FKKSAKPAGN…KPKKELPEKI (88 aa)) form a disordered region. Residues 92 to 101 (NNVQNTQFNN) show a composition bias toward low complexity. The span at 102-118 (KNKKKNNNNKKNKRGKN) shows a compositional bias: basic residues. Over residues 125 to 137 (KQFKPKKELPEKI) the composition is skewed to basic and acidic residues. Residues 217–386 (IRPPVVTIMG…LLVSEVEELK (170 aa)) form the tr-type G domain. A G1 region spans residues 226-233 (GHVDHGKT). 226–233 (GHVDHGKT) is a GTP binding site. Residues 251–255 (GITQH) form a G2 region. Residues 272 to 275 (DTPG) form a G3 region. Residues 272-276 (DTPGH) and 326-329 (NKID) each bind GTP. Residues 326 to 329 (NKID) are G4. The G5 stretch occupies residues 362 to 364 (SAL).

This sequence belongs to the TRAFAC class translation factor GTPase superfamily. Classic translation factor GTPase family. IF-2 subfamily.

The protein resides in the cytoplasm. Functionally, one of the essential components for the initiation of protein synthesis. Protects formylmethionyl-tRNA from spontaneous hydrolysis and promotes its binding to the 30S ribosomal subunits. Also involved in the hydrolysis of GTP during the formation of the 70S ribosomal complex. The sequence is that of Translation initiation factor IF-2 from Bacillus licheniformis (strain ATCC 14580 / DSM 13 / JCM 2505 / CCUG 7422 / NBRC 12200 / NCIMB 9375 / NCTC 10341 / NRRL NRS-1264 / Gibson 46).